Reading from the N-terminus, the 503-residue chain is von Willebrand factor A domain-containing protein 1 (503 aa).

The N-terminal stretch at 1 to 21 is a signal peptide; sequence MEVRKALTCVFLTVFLCSGDA. A VWFA domain is found at 36–213; the sequence is DVLFLLDSSG…IIGEDLRNSI (178 aa). 2 Fibronectin type-III domains span residues 218–324 and 331–423; these read RAER…TVNP and LLSS…VLPA.

As to quaternary structure, homodimer or homomultimer; disulfide-linked.

It localises to the secreted. The protein localises to the extracellular space. It is found in the extracellular matrix. The protein resides in the basement membrane. Its function is as follows. Promotes matrix assembly. Involved in the organization of skeletal muscles and in the formation of neuromuscular junctions. The polypeptide is von Willebrand factor A domain-containing protein 1 (Danio rerio (Zebrafish)).